A 284-amino-acid polypeptide reads, in one-letter code: D-tagatose-1,6-bisphosphate aldolase subunit GatY (284 aa).

The active-site Proton donor is Asp82. Positions 83 and 180 each coordinate Zn(2+). Gly181 provides a ligand contact to dihydroxyacetone phosphate. His208 is a Zn(2+) binding site. Dihydroxyacetone phosphate is bound by residues 209 to 211 and 230 to 233; these read GAS and NVAT.

It belongs to the class II fructose-bisphosphate aldolase family. TagBP aldolase GatY subfamily. In terms of assembly, forms a complex with GatZ. Requires Zn(2+) as cofactor.

The catalysed reaction is D-tagatofuranose 1,6-bisphosphate = D-glyceraldehyde 3-phosphate + dihydroxyacetone phosphate. The protein operates within carbohydrate metabolism; D-tagatose 6-phosphate degradation; D-glyceraldehyde 3-phosphate and glycerone phosphate from D-tagatose 6-phosphate: step 2/2. In terms of biological role, catalytic subunit of the tagatose-1,6-bisphosphate aldolase GatYZ, which catalyzes the reversible aldol condensation of dihydroxyacetone phosphate (DHAP or glycerone-phosphate) with glyceraldehyde 3-phosphate (G3P) to produce tagatose 1,6-bisphosphate (TBP). Requires GatZ subunit for full activity and stability. Is involved in the catabolism of galactitol. The polypeptide is D-tagatose-1,6-bisphosphate aldolase subunit GatY (Escherichia coli O45:K1 (strain S88 / ExPEC)).